The chain runs to 485 residues: Glutamate--tRNA ligase (485 aa).

The short motif at 11-21 (PSPTGLLHIGN) is the 'HIGH' region element. Residues 255–259 (KLSKR) carry the 'KMSKS' region motif. Lysine 258 is an ATP binding site.

Belongs to the class-I aminoacyl-tRNA synthetase family. Glutamate--tRNA ligase type 1 subfamily. As to quaternary structure, monomer.

It localises to the cytoplasm. The catalysed reaction is tRNA(Glu) + L-glutamate + ATP = L-glutamyl-tRNA(Glu) + AMP + diphosphate. In terms of biological role, catalyzes the attachment of glutamate to tRNA(Glu) in a two-step reaction: glutamate is first activated by ATP to form Glu-AMP and then transferred to the acceptor end of tRNA(Glu). The sequence is that of Glutamate--tRNA ligase from Streptococcus mutans serotype c (strain ATCC 700610 / UA159).